The following is a 101-amino-acid chain: Chaperone modulatory protein CbpM (101 aa).

This sequence belongs to the CbpM family.

Interacts with CbpA and inhibits both the DnaJ-like co-chaperone activity and the DNA binding activity of CbpA. Together with CbpA, modulates the activity of the DnaK chaperone system. Does not inhibit the co-chaperone activity of DnaJ. The polypeptide is Chaperone modulatory protein CbpM (Citrobacter koseri (strain ATCC BAA-895 / CDC 4225-83 / SGSC4696)).